Consider the following 133-residue polypeptide: Norrin (133 aa).

The N-terminal stretch at 1–24 is a signal peptide; that stretch reads MRKHVLAASFSMLSLLVIMGDTDS. Intrachain disulfides connect Cys39–Cys96, Cys55–Cys110, Cys65–Cys126, and Cys69–Cys128. A CTCK domain is found at 39 to 132; the sequence is CMRHHYVDSI…ILSCHCEECN (94 aa).

As to quaternary structure, homodimer; disulfide-linked. Component of a complex, at least composed of TSPAN12, FZD4, LRP5/6 and norrin (NDP). Binds FZD4 with high affinity. Interacts with LRP6 (via Beta-propellers 1 and 2). Expressed in the outer nuclear, inner nuclear and ganglion cell layers of the retina, and in fetal and adult brain.

It is found in the secreted. Functionally, activates the canonical Wnt signaling pathway through FZD4 and LRP5 coreceptor. Plays a central role in retinal vascularization by acting as a ligand for FZD4 that signals via stabilizing beta-catenin (CTNNB1) and activating LEF/TCF-mediated transcriptional programs. Acts in concert with TSPAN12 to activate FZD4 independently of the Wnt-dependent activation of FZD4, suggesting the existence of a Wnt-independent signaling that also promote accumulation the beta-catenin (CTNNB1). May be involved in a pathway that regulates neural cell differentiation and proliferation. Possible role in neuroectodermal cell-cell interaction. The sequence is that of Norrin (NDP) from Homo sapiens (Human).